A 394-amino-acid chain; its full sequence is Elongation factor Tu (394 aa).

The region spanning 10–204 is the tr-type G domain; sequence KPHVNVGTIG…HLDNYIPEPE (195 aa). The interval 19–26 is G1; the sequence is GHVDHGKT. 19 to 26 is a binding site for GTP; that stretch reads GHVDHGKT. Thr-26 contacts Mg(2+). The interval 60–64 is G2; that stretch reads GITIN. Residues 81 to 84 form a G3 region; it reads DCPG. Residues 81–85 and 136–139 contribute to the GTP site; these read DCPGH and NKCD. The segment at 136–139 is G4; sequence NKCD. The G5 stretch occupies residues 174 to 176; that stretch reads SAL.

This sequence belongs to the TRAFAC class translation factor GTPase superfamily. Classic translation factor GTPase family. EF-Tu/EF-1A subfamily. As to quaternary structure, monomer.

It localises to the cytoplasm. The enzyme catalyses GTP + H2O = GDP + phosphate + H(+). Functionally, GTP hydrolase that promotes the GTP-dependent binding of aminoacyl-tRNA to the A-site of ribosomes during protein biosynthesis. The chain is Elongation factor Tu from Histophilus somni (strain 129Pt) (Haemophilus somnus).